A 188-amino-acid polypeptide reads, in one-letter code: uncharacterized protein (188 aa).

This is an uncharacterized protein from Autographa californica nuclear polyhedrosis virus (AcMNPV).